The following is a 454-amino-acid chain: MSDNDTIVAQATPPGRGGVGILRISGFKAREVAETVLGKLPKPRYADYLPFKDADGSVLDQGIALWFPGPNSFTGEDVLELQGHGGPVILDLLLKRILTIPGLRIARPGEFSERAFLNDKLDLAQAEAIADLIDASSEQAARSALNSLQGAFSARVNHLVEALTHLRIYVEAAIDFPDEEIDFLSDGKIEAQLNDVIADLDAVRAEARQGSLLREGMKVVIAGRPNAGKSSLLNALAGREAAIVTDIAGTTRDVLREHIHIDGMPLHIIDTAGLREASDEVERIGIERAWQEIEQADRVLFMVDGTTTDAVDPAEIWPEFIARLPAKLPITVVRNKADITGETLGMSEVNGHALIRLSARTGEGVDVLRNHLKQSMGFDTNMEGGFLARRRHLQALEQAAEHLQQGKAQLLGAWAGELLAEELRLAQQNLSEITGEFTSDDLLGRIFSSFCIGK.

(6S)-5-formyl-5,6,7,8-tetrahydrofolate-binding residues include Arg23, Glu80, and Lys120. Residues 216-377 (GMKVVIAGRP…LRNHLKQSMG (162 aa)) form the TrmE-type G domain. Asn226 contributes to the K(+) binding site. GTP is bound by residues 226–231 (NAGKSS), 245–251 (TDIAGTT), 270–273 (DTAG), 335–338 (NKAD), and 358–360 (SAR). Ser230 is a Mg(2+) binding site. Residues Thr245, Ile247, and Thr250 each coordinate K(+). Thr251 serves as a coordination point for Mg(2+). Lys454 is a (6S)-5-formyl-5,6,7,8-tetrahydrofolate binding site.

This sequence belongs to the TRAFAC class TrmE-Era-EngA-EngB-Septin-like GTPase superfamily. TrmE GTPase family. As to quaternary structure, homodimer. Heterotetramer of two MnmE and two MnmG subunits. K(+) serves as cofactor.

The protein localises to the cytoplasm. Its function is as follows. Exhibits a very high intrinsic GTPase hydrolysis rate. Involved in the addition of a carboxymethylaminomethyl (cmnm) group at the wobble position (U34) of certain tRNAs, forming tRNA-cmnm(5)s(2)U34. The sequence is that of tRNA modification GTPase MnmE from Shigella boydii serotype 18 (strain CDC 3083-94 / BS512).